We begin with the raw amino-acid sequence, 272 residues long: Glutamate racemase (272 aa).

Substrate contacts are provided by residues 12–13 (DS) and 44–45 (YG). Cys-75 (proton donor/acceptor) is an active-site residue. A substrate-binding site is contributed by 76 to 77 (NT). The active-site Proton donor/acceptor is Cys-185. 186-187 (TH) contributes to the substrate binding site.

Belongs to the aspartate/glutamate racemases family.

It catalyses the reaction L-glutamate = D-glutamate. It participates in cell wall biogenesis; peptidoglycan biosynthesis. In terms of biological role, provides the (R)-glutamate required for cell wall biosynthesis. This Mycobacterium leprae (strain TN) protein is Glutamate racemase.